The following is a 2412-amino-acid chain: Centrosomal protein of 295 kDa (2412 aa).

Residues 1–540 (MKRKGMNTKL…KQADQPEVCC (540 aa)) are necessary for centriole targeting and microtubule association. Serine 13 carries the phosphoserine modification. 5 coiled-coil regions span residues 63–84 (AEELRAKWEEAQSQKIQNLEKL), 114–134 (AERKRKAEVRHKEALKVQKNQ), 209–273 (DAHL…DLAR), 489–535 (RRKQ…QADQ), and 563–592 (HQLLQQNRLHKETVETARKRLLEYQTVLKE). 2 disordered regions span residues 600-641 (SALV…YQPV) and 739-762 (LDSQQISSEDSENISSKPSEPSPF). Serine 634 carries the post-translational modification Phosphoserine. A compositionally biased stretch (polar residues) spans 739 to 757 (LDSQQISSEDSENISSKPS). Positions 811–841 (AQQGDLRFLQEQLELQKKVLQARQEAREKLL) form a coiled coil. Disordered regions lie at residues 871–891 (SASAESGNFQTSSTKSDATVS), 973–1005 (DTQSKKIQKQPLPANKKGLLPSQSEVSKAQDGS), 1158–1178 (LSSPSQVTDWGTSRGSVSVRS), and 1216–1240 (WVDTEKESFQSSPLTPENPSSQQTG). Polar residues-rich tracts occupy residues 993 to 1005 (PSQSEVSKAQDGS), 1158 to 1176 (LSSPSQVTDWGTSRGSVSV), and 1224 to 1240 (FQSSPLTPENPSSQQTG). 2 coiled-coil regions span residues 1300 to 1327 (QQDSLKALQEQLATQREAIIHSRQEAHE) and 1448 to 1493 (QHDD…SKQI). Serine 1573 is subject to Phosphoserine. 4 disordered regions span residues 1820–1895 (LAHD…LSSV), 1916–1937 (ESFSEQTEHLEQESTNKQEETD), 2028–2048 (DLSSPGTSQEDSDFYQSSESS), and 2089–2111 (TEGSEQSFQQLRPEFSSQESQHA). Over residues 1836–1868 (SKSHDDNAEAVKVKKSDVEDHAVLSHAVSKEEA) the composition is skewed to basic and acidic residues. Positions 1885 to 1895 (QEISQEPLSSV) are enriched in polar residues. The span at 1921–1935 (QTEHLEQESTNKQEE) shows a compositional bias: basic and acidic residues. A compositionally biased stretch (polar residues) spans 2089–2108 (TEGSEQSFQQLRPEFSSQES). The segment at 2367 to 2412 (SLQEAFMTRQTLTERSYQRQREIWNKTRLPQTKVSKEKLPTGCTGS) is ALMS motif.

As to quaternary structure, interacts (via ALMS motif) with microtubules; this interaction is direct.

The protein localises to the cytoplasm. Its subcellular location is the cytoskeleton. The protein resides in the microtubule organizing center. It is found in the centrosome. It localises to the centriole. The protein localises to the spindle. Centriole-enriched microtubule-binding protein involved in centriole biogenesis. Essential for the generation of the distal portion of new-born centrioles in a CPAP- and CEP120-mediated elongation dependent manner during the cell cycle S/G2 phase after formation of the initiating cartwheel structure. Required for the recruitment of centriolar proteins, such as POC1B, POC5 and CEP135, into the distal portion of centrioles. Also required for centriole-to-centrosome conversion during mitotic progression, but is dispensable for cartwheel removal or centriole disengagement. Binds to and stabilizes centriolar microtubule. May be involved in ciliogenesis. This is Centrosomal protein of 295 kDa from Mus musculus (Mouse).